The following is an 853-amino-acid chain: Lysine-specific histone demethylase 1A (853 aa).

The interval methionine 1 to glycine 177 is disordered. The segment covering alanine 7–serine 26 has biased composition (low complexity). At threonine 60 the chain carries Phosphothreonine. Residues alanine 76 to proline 97 are compositionally biased toward low complexity. Phosphothreonine is present on threonine 105. A coiled-coil region spans residues threonine 111–leucine 152. Phosphoserine is present on residues serine 127 and serine 132. Tyrosine 136 carries the post-translational modification Phosphotyrosine. Phosphoserine is present on serine 138. A compositionally biased stretch (basic and acidic residues) spans glutamate 139–leucine 152. Residues proline 161–serine 173 show a composition bias toward acidic residues. At serine 167 the chain carries Phosphoserine. The SWIRM domain occupies valine 175–leucine 274. FAD-binding positions include serine 290, glutamate 309, arginine 311, arginine 317, and methionine 333–valine 334. Residues phenylalanine 301–methionine 853 are demethylase activity. Residues isoleucine 429–asparagine 515 are a coiled coil. 3 positions are modified to N6-acetyllysine: lysine 433, lysine 434, and lysine 437. Glycyl lysine isopeptide (Lys-Gly) (interchain with G-Cter in SUMO2) cross-links involve residues lysine 443 and lysine 470. A Glycyl lysine isopeptide (Lys-Gly) (interchain with G-Cter in ubiquitin) cross-link involves residue lysine 504. Serine 612 is modified (phosphoserine). Residues glutamate 802 and threonine 811 to valine 812 each bind FAD. Serine 850 is modified (phosphoserine).

Belongs to the flavin monoamine oxidase family. Component of a histone demethylase complex with RCOR1. Component of a BHC histone deacetylase complex that contains HDAC1, HDAC2, HMG20B, KDM1A, RCOR1 and PHF21A. The BHC complex may also contain ZMYM2, ZNF217, ZMYM3, GSE1 and GTF2I. In the complex, RCOR1 strongly enhances the demethylase activity and protects it from the proteasome while PHF21A inhibits the demethylase activity. Interacts with the androgen receptor (AR). Component of a RCOR/GFI/KDM1A/HDAC complex. Interacts directly with GFI1 and GFI1B. Interacts with SNAI1 (via SNAG domain). Interacts with INSM1. Interacts (via AOD/Tower domain) with JADE2 (via C-terminus). Interacts with ESRRB; co-occupes the core set of ESRRB targets. Interacts with SAMD1 (via WH domain); the interaction modulates KDM1A function. Interacts with RBPJ. Interacts with L3MBTL3. Interacts with ZMYND8. Requires FAD as cofactor. Post-translationally, acetylated by KAT8 in epithelial but not in mesenchymal cells, thereby regulating the epithelial-to-mesenchymal transition. Acetylation by KAT8 reduces KDM1A association with nucleosomes, thereby decreasing histone H3 demethylation, leading to transcription activatio of target genes. In terms of processing, polyubiquitinated by JADE2; which leads to its proteasomal degradation. Deubiquitinated by USP38; preventing it from degradation by the 26S proteasome. In terms of tissue distribution, ubiquitously expressed.

The protein resides in the nucleus. It localises to the chromosome. The catalysed reaction is N(6),N(6)-dimethyl-L-lysyl(4)-[histone H3] + 2 A + 2 H2O = L-lysyl(4)-[histone H3] + 2 formaldehyde + 2 AH2. Its activity is regulated as follows. The N-terminal sequences of INSM1 and SNAI1 compete with histone H3 for the same binding site and thereby inhibit histone demethylation (in vitro). Functionally, histone demethylase that can demethylate both 'Lys-4' (H3K4me) and 'Lys-9' (H3K9me) of histone H3, thereby acting as a coactivator or a corepressor, depending on the context. Acts by oxidizing the substrate by FAD to generate the corresponding imine that is subsequently hydrolyzed. Acts as a corepressor by mediating demethylation of H3K4me, a specific tag for epigenetic transcriptional activation. Demethylates both mono- (H3K4me1) and di-methylated (H3K4me2) H3K4me. May play a role in the repression of neuronal genes. Alone, it is unable to demethylate H3K4me on nucleosomes and requires the presence of RCOR1/CoREST to achieve such activity. Also acts as a coactivator of androgen receptor (ANDR)-dependent transcription, by being recruited to ANDR target genes and mediating demethylation of H3K9me, a specific tag for epigenetic transcriptional repression. The presence of PRKCB in ANDR-containing complexes, which mediates phosphorylation of 'Thr-6' of histone H3 (H3T6ph), a specific tag that prevents demethylation H3K4me, prevents H3K4me demethylase activity of KDM1A. Demethylates di-methylated 'Lys-370' of p53/TP53 which prevents interaction of p53/TP53 with TP53BP1 and represses p53/TP53-mediated transcriptional activation. Demethylates and stabilizes the DNA methylase DNMT1. Demethylates methylated 'Lys-44' and methylated 'Lys-119' of SOX2. Required for gastrulation during embryogenesis. Component of a RCOR/GFI/KDM1A/HDAC complex that suppresses, via histone deacetylase (HDAC) recruitment, a number of genes implicated in multilineage blood cell development. Facilitates epithelial-to-mesenchymal transition by acting as an effector of SNAI1-mediated transcription repression of epithelial markers E-cadherin/CDH1, CDN7 and KRT8. Required for the maintenance of the silenced state of the SNAI1 target genes E-cadherin/CDH1 and CDN7. Required for the repression of GIPR expression. The chain is Lysine-specific histone demethylase 1A from Mus musculus (Mouse).